The following is a 105-amino-acid chain: Small ribosomal subunit protein uS10 (105 aa).

It belongs to the universal ribosomal protein uS10 family. Part of the 30S ribosomal subunit.

In terms of biological role, involved in the binding of tRNA to the ribosomes. This Synechococcus sp. (strain JA-3-3Ab) (Cyanobacteria bacterium Yellowstone A-Prime) protein is Small ribosomal subunit protein uS10.